We begin with the raw amino-acid sequence, 62 residues long: Sperm protamine P1 (62 aa).

A disordered region spans residues 1 to 62 (MARYRRHSRS…RRYSRRGRRR (62 aa)).

It belongs to the protamine P1 family. As to expression, testis.

It is found in the nucleus. The protein resides in the chromosome. Functionally, protamines substitute for histones in the chromatin of sperm during the haploid phase of spermatogenesis. They compact sperm DNA into a highly condensed, stable and inactive complex. This is Sperm protamine P1 (PRM1) from Pseudantechinus bilarni (Sandstone dibbler).